The chain runs to 440 residues: Chromosome partition protein MukF (440 aa).

The interval 208-236 (LSETSGTLRELQDTLEAAGDKLQANLLRI) is leucine-zipper.

The protein belongs to the MukF family. Interacts, and probably forms a ternary complex, with MukE and MukB via its C-terminal region. The complex formation is stimulated by calcium or magnesium. It is required for an interaction between MukE and MukB.

The protein resides in the cytoplasm. The protein localises to the nucleoid. Its function is as follows. Involved in chromosome condensation, segregation and cell cycle progression. May participate in facilitating chromosome segregation by condensation DNA from both sides of a centrally located replisome during cell division. Not required for mini-F plasmid partitioning. Probably acts via its interaction with MukB and MukE. Overexpression results in anucleate cells. It has a calcium binding activity. The sequence is that of Chromosome partition protein MukF from Yersinia pestis.